The chain runs to 423 residues: T-box transcription factor T-A (423 aa).

Residues Leu44 to Asp212 constitute a DNA-binding region (T-box). Residues Glu215–Thr227 are compositionally biased toward basic and acidic residues. 2 disordered regions span residues Glu215–Tyr234 and Ala280–Ser304. The segment covering Arg290–Ser304 has biased composition (polar residues).

In terms of assembly, monomer. Binds DNA as a monomer. As to expression, first expressed at the dorsal side of the blastula embryo. Expressed in the germ ring, shield and chordamesoderm during gastrulation and is restricted to the notochord and tailbud during somitogenesis (at protein level).

The protein resides in the nucleus. Functionally, involved in the transcriptional regulation of genes required for mesoderm differentiation, including itself. Indispensable for the formation of the notochord and the tail structure. Functions together with tbx16/spadetail in development of trunk and tail mesoderm. Functions by itself early in development to repress medial floor plate and promote notochord fate but at later times, functions together with tbx16/spadetail to promote medial floor plate formation. Acts in a parallel pathway to, but cooperates with, non-canonical wnt-signaling during tail formation. Required for the morphogenesis of Kupffer's vesicle and regulates left-right asymmetry. This is T-box transcription factor T-A (tbxta) from Danio rerio (Zebrafish).